Reading from the N-terminus, the 353-residue chain is Histidinol-phosphate aminotransferase 1 (353 aa).

The residue at position 211 (Lys-211) is an N6-(pyridoxal phosphate)lysine.

This sequence belongs to the class-II pyridoxal-phosphate-dependent aminotransferase family. Histidinol-phosphate aminotransferase subfamily. In terms of assembly, homodimer. It depends on pyridoxal 5'-phosphate as a cofactor.

It catalyses the reaction L-histidinol phosphate + 2-oxoglutarate = 3-(imidazol-4-yl)-2-oxopropyl phosphate + L-glutamate. The protein operates within amino-acid biosynthesis; L-histidine biosynthesis; L-histidine from 5-phospho-alpha-D-ribose 1-diphosphate: step 7/9. The chain is Histidinol-phosphate aminotransferase 1 (hisC1) from Nostoc sp. (strain PCC 7120 / SAG 25.82 / UTEX 2576).